A 299-amino-acid polypeptide reads, in one-letter code: Probable GTP 3',8-cyclase (299 aa).

The 226-residue stretch at 4–229 (LHNREIKSLR…MQNRKKYLVD (226 aa)) folds into the Radical SAM core domain. Arginine 13 is a GTP binding site. 2 residues coordinate [4Fe-4S] cluster: cysteine 20 and cysteine 24. Tyrosine 26 provides a ligand contact to S-adenosyl-L-methionine. Residue cysteine 27 coordinates [4Fe-4S] cluster. GTP is bound at residue lysine 61. Position 65 (glycine 65) interacts with S-adenosyl-L-methionine. Threonine 94 is a GTP binding site. Serine 118 is an S-adenosyl-L-methionine binding site. Residue lysine 154 participates in GTP binding. [4Fe-4S] cluster-binding residues include cysteine 245 and cysteine 248. Residue 250 to 252 (RIR) participates in GTP binding. Cysteine 262 contributes to the [4Fe-4S] cluster binding site.

Belongs to the radical SAM superfamily. MoaA family. It depends on [4Fe-4S] cluster as a cofactor.

It catalyses the reaction GTP + AH2 + S-adenosyl-L-methionine = (8S)-3',8-cyclo-7,8-dihydroguanosine 5'-triphosphate + 5'-deoxyadenosine + L-methionine + A + H(+). It functions in the pathway cofactor biosynthesis; molybdopterin biosynthesis. Functionally, catalyzes the cyclization of GTP to (8S)-3',8-cyclo-7,8-dihydroguanosine 5'-triphosphate. The chain is Probable GTP 3',8-cyclase from Methanococcus aeolicus (strain ATCC BAA-1280 / DSM 17508 / OCM 812 / Nankai-3).